We begin with the raw amino-acid sequence, 62 residues long: Sec-independent protein translocase protein TatAc (62 aa).

A helical transmembrane segment spans residues I8 to G28.

The protein belongs to the TatA/E family. In terms of assembly, forms a complex with TatC.

The protein localises to the cell membrane. Part of the twin-arginine translocation (Tat) system that transports large folded proteins containing a characteristic twin-arginine motif in their signal peptide across membranes. TatA could form the protein-conducting channel of the Tat system. This Bacillus subtilis (strain 168) protein is Sec-independent protein translocase protein TatAc.